A 741-amino-acid polypeptide reads, in one-letter code: Ethylene receptor (741 aa).

3 helical membrane-spanning segments follow: residues 23–43 (ISDFFIALAYFSIPLELIYFV), 53–73 (WVLVQFGAFIVLCGATHLINL), and 92–112 (VLTAVVSCATALMLVHIIPDL). Residues cysteine 65 and histidine 69 each contribute to the Cu cation site. The region spanning 158-307 (DRHTILKTTL…VVADQVAVAL (150 aa)) is the GAF domain. One can recognise a Histidine kinase domain in the interval 350–589 (VMNHEMRTPM…TFIVKLGFPE (240 aa)). Phosphohistidine; by autocatalysis is present on histidine 353. In terms of domain architecture, Response regulatory spans 615 to 732 (KVLVMDDNGV…KMRSVLSELL (118 aa)). A 4-aspartylphosphate modification is found at aspartate 663.

This sequence belongs to the ethylene receptor family. In terms of assembly, homodimer; disulfide-linked. It depends on Cu cation as a cofactor. Activation probably requires a transfer of a phosphate group between a His in the transmitter domain and an Asp of the receiver domain.

It is found in the endoplasmic reticulum membrane. It catalyses the reaction ATP + protein L-histidine = ADP + protein N-phospho-L-histidine.. Its function is as follows. May act early in the ethylene signal transduction pathway, possibly as an ethylene receptor, or as a regulator of the pathway. This chain is Ethylene receptor (ETR1), found in Malus domestica (Apple).